A 248-amino-acid polypeptide reads, in one-letter code: Triosephosphate isomerase (248 aa).

Residue 9-11 (NWK) participates in substrate binding. Catalysis depends on H101, which acts as the Electrophile. The active-site Proton acceptor is the E170. Substrate-binding positions include G176, S208, and 229–230 (GG).

The protein belongs to the triosephosphate isomerase family. As to quaternary structure, homodimer.

It is found in the cytoplasm. It catalyses the reaction D-glyceraldehyde 3-phosphate = dihydroxyacetone phosphate. Its pathway is carbohydrate biosynthesis; gluconeogenesis. It functions in the pathway carbohydrate degradation; glycolysis; D-glyceraldehyde 3-phosphate from glycerone phosphate: step 1/1. Its function is as follows. Involved in the gluconeogenesis. Catalyzes stereospecifically the conversion of dihydroxyacetone phosphate (DHAP) to D-glyceraldehyde-3-phosphate (G3P). This is Triosephosphate isomerase from Mycoplasmopsis pulmonis (strain UAB CTIP) (Mycoplasma pulmonis).